The sequence spans 172 residues: Shikimate kinase (172 aa).

14–19 (GAGKST) contacts ATP. S18 serves as a coordination point for Mg(2+). Positions 36, 60, and 82 each coordinate substrate. R120 lines the ATP pocket. R140 lines the substrate pocket.

The protein belongs to the shikimate kinase family. Monomer. Requires Mg(2+) as cofactor.

It is found in the cytoplasm. The catalysed reaction is shikimate + ATP = 3-phosphoshikimate + ADP + H(+). It participates in metabolic intermediate biosynthesis; chorismate biosynthesis; chorismate from D-erythrose 4-phosphate and phosphoenolpyruvate: step 5/7. Its function is as follows. Catalyzes the specific phosphorylation of the 3-hydroxyl group of shikimic acid using ATP as a cosubstrate. The polypeptide is Shikimate kinase (Tolumonas auensis (strain DSM 9187 / NBRC 110442 / TA 4)).